The sequence spans 648 residues: Probable ATP-dependent RNA helicase DDX43 (648 aa).

Residues 1-60 (MSHHGGAPKASTWVVASRRSSTVSRAPERRPAEELNRTGPEGYSVGRGGRWRGTSRPPEA) form a disordered region. A compositionally biased stretch (low complexity) spans 10–25 (ASTWVVASRRSSTVSR). The span at 26–36 (APERRPAEELN) shows a compositional bias: basic and acidic residues. Residues 67–128 (ELPLCFALKS…AMQTKAKAVI (62 aa)) form the KH domain. The Q motif motif lies at 242-270 (TFDDAFQCYPEVMENIKKAGFQKPTPIQS). The 176-residue stretch at 273 to 448 (WPIVLQGIDL…QSYLKEPMIV (176 aa)) folds into the Helicase ATP-binding domain. 286–293 (AQTGTGKT) is a binding site for ATP. Residues 396-399 (DEAD) carry the DEAD box motif. The Helicase C-terminal domain maps to 460-621 (SVKQNIIVTT…SIPEELVSMA (162 aa)). Over residues 628–641 (QQKREMERKMERPQ) the composition is skewed to basic and acidic residues. The segment at 628 to 648 (QQKREMERKMERPQGRPKKFH) is disordered.

It belongs to the DEAD box helicase family. As to expression, expressed in testis. Expressed in many tumors of various histological types at a level that is 100-fold higher than the level observed in normal tissues except testis.

The catalysed reaction is ATP + H2O = ADP + phosphate + H(+). The protein is Probable ATP-dependent RNA helicase DDX43 (DDX43) of Homo sapiens (Human).